Consider the following 295-residue polypeptide: Light-independent protochlorophyllide reductase iron-sulfur ATP-binding protein (295 aa).

Residues 39–44 (GIGKST) and Lys68 each bind ATP. Mg(2+) is bound at residue Ser43. Positions 124 and 158 each coordinate [4Fe-4S] cluster. ATP is bound by residues 209–210 (NR) and 233–235 (PDL).

This sequence belongs to the NifH/BchL/ChlL family. In terms of assembly, homodimer. Protochlorophyllide reductase is composed of three subunits; BchL, BchN and BchB. Requires [4Fe-4S] cluster as cofactor.

The enzyme catalyses chlorophyllide a + oxidized 2[4Fe-4S]-[ferredoxin] + 2 ADP + 2 phosphate = protochlorophyllide a + reduced 2[4Fe-4S]-[ferredoxin] + 2 ATP + 2 H2O. The protein operates within porphyrin-containing compound metabolism; bacteriochlorophyll biosynthesis (light-independent). In terms of biological role, component of the dark-operative protochlorophyllide reductase (DPOR) that uses Mg-ATP and reduced ferredoxin to reduce ring D of protochlorophyllide (Pchlide) to form chlorophyllide a (Chlide). This reaction is light-independent. The L component serves as a unique electron donor to the NB-component of the complex, and binds Mg-ATP. This Rhodospirillum rubrum (strain ATCC 11170 / ATH 1.1.1 / DSM 467 / LMG 4362 / NCIMB 8255 / S1) protein is Light-independent protochlorophyllide reductase iron-sulfur ATP-binding protein.